The following is a 414-amino-acid chain: Serine hydroxymethyltransferase (414 aa).

(6S)-5,6,7,8-tetrahydrofolate-binding positions include L121 and 125 to 127 (GHL). K229 carries the post-translational modification N6-(pyridoxal phosphate)lysine.

The protein belongs to the SHMT family. As to quaternary structure, homodimer. Pyridoxal 5'-phosphate serves as cofactor.

The protein resides in the cytoplasm. It catalyses the reaction (6R)-5,10-methylene-5,6,7,8-tetrahydrofolate + glycine + H2O = (6S)-5,6,7,8-tetrahydrofolate + L-serine. Its pathway is one-carbon metabolism; tetrahydrofolate interconversion. The protein operates within amino-acid biosynthesis; glycine biosynthesis; glycine from L-serine: step 1/1. Catalyzes the reversible interconversion of serine and glycine with tetrahydrofolate (THF) serving as the one-carbon carrier. This reaction serves as the major source of one-carbon groups required for the biosynthesis of purines, thymidylate, methionine, and other important biomolecules. Also exhibits THF-independent aldolase activity toward beta-hydroxyamino acids, producing glycine and aldehydes, via a retro-aldol mechanism. This Polynucleobacter asymbioticus (strain DSM 18221 / CIP 109841 / QLW-P1DMWA-1) (Polynucleobacter necessarius subsp. asymbioticus) protein is Serine hydroxymethyltransferase.